A 244-amino-acid chain; its full sequence is Protein crossbronx (244 aa).

Residues 20 to 176 (QQEYKILAEY…VQKNIKESKE (157 aa)) form the UBC core domain. A disordered region spans residues 209-244 (AGRSKQTEPSAQQANGGHATGLSWVKEGEFKPLSIE).

It belongs to the ubiquitin-conjugating enzyme family. FTS subfamily.

In Drosophila erecta (Fruit fly), this protein is Protein crossbronx (cbx).